Here is a 168-residue protein sequence, read N- to C-terminus: ATP synthase subunit d, mitochondrial (168 aa).

It belongs to the ATPase d subunit family. F-type ATPases have 2 components, CF(1) - the catalytic core - and CF(0) - the membrane proton channel. CF(0) seems to have nine subunits: a, b, c, d, e, f, g, F6 and 8 (or A6L).

The protein localises to the mitochondrion. It localises to the mitochondrion inner membrane. Functionally, mitochondrial membrane ATP synthase (F(1)F(0) ATP synthase or Complex V) produces ATP from ADP in the presence of a proton gradient across the membrane which is generated by electron transport complexes of the respiratory chain. F-type ATPases consist of two structural domains, F(1) - containing the extramembraneous catalytic core, and F(0) - containing the membrane proton channel, linked together by a central stalk and a peripheral stalk. During catalysis, ATP synthesis in the catalytic domain of F(1) is coupled via a rotary mechanism of the central stalk subunits to proton translocation. Part of the complex F(0) domain and the peripheric stalk, which acts as a stator to hold the catalytic alpha(3)beta(3) subcomplex and subunit a/ATP6 static relative to the rotary elements. This Arabidopsis thaliana (Mouse-ear cress) protein is ATP synthase subunit d, mitochondrial.